The primary structure comprises 435 residues: Zinc finger and BTB domain-containing protein 25 (435 aa).

The 107-residue stretch at 1–107 folds into the BTB domain; that stretch reads MDTASHSLVL…GIRFLHADYL (107 aa). Residues Lys142, Lys148, Lys198, and Lys204 each participate in a glycyl lysine isopeptide (Lys-Gly) (interchain with G-Cter in SUMO2) cross-link. A C2H2-type 1 zinc finger spans residues 238-260; sequence HLCHYCGERFDSRSNLRQHLHTH. Residues Lys303 and Lys330 each participate in a glycyl lysine isopeptide (Lys-Gly) (interchain with G-Cter in SUMO2) cross-link. Residues 349–371 form a C2H2-type 2 zinc finger; that stretch reads MSCTICGHKFPRKSQLLEHMYTH. Lys405 is covalently cross-linked (Glycyl lysine isopeptide (Lys-Gly) (interchain with G-Cter in SUMO2)).

As to expression, expressed mainly in hematopoietic cells and testis.

The protein resides in the nucleus. In terms of biological role, may be involved in transcriptional regulation. The protein is Zinc finger and BTB domain-containing protein 25 (ZBTB25) of Homo sapiens (Human).